A 353-amino-acid chain; its full sequence is Photosystem II D2 protein (353 aa).

Residue Thr-2 is modified to N-acetylthreonine. The residue at position 2 (Thr-2) is a Phosphothreonine. The helical transmembrane segment at Cys-41–Thr-61 threads the bilayer. A chlorophyll a-binding site is contributed by His-118. The chain crosses the membrane as a helical span at residues Gly-125–Pro-141. Pheophytin a contacts are provided by Gln-130 and Asn-143. Residues Val-153–Ser-166 form a helical membrane-spanning segment. Position 198 (His-198) interacts with chlorophyll a. A helical transmembrane segment spans residues Ala-208–Asp-228. Residues His-215 and Phe-262 each contribute to the a plastoquinone site. Position 215 (His-215) interacts with Fe cation. His-269 serves as a coordination point for Fe cation. The chain crosses the membrane as a helical span at residues Gly-279–Arg-295.

The protein belongs to the reaction center PufL/M/PsbA/D family. PSII is composed of 1 copy each of membrane proteins PsbA, PsbB, PsbC, PsbD, PsbE, PsbF, PsbH, PsbI, PsbJ, PsbK, PsbL, PsbM, PsbT, PsbX, PsbY, PsbZ, Psb30/Ycf12, at least 3 peripheral proteins of the oxygen-evolving complex and a large number of cofactors. It forms dimeric complexes. It depends on The D1/D2 heterodimer binds P680, chlorophylls that are the primary electron donor of PSII, and subsequent electron acceptors. It shares a non-heme iron and each subunit binds pheophytin, quinone, additional chlorophylls, carotenoids and lipids. There is also a Cl(-1) ion associated with D1 and D2, which is required for oxygen evolution. The PSII complex binds additional chlorophylls, carotenoids and specific lipids. as a cofactor.

The protein resides in the plastid. It is found in the chloroplast thylakoid membrane. The catalysed reaction is 2 a plastoquinone + 4 hnu + 2 H2O = 2 a plastoquinol + O2. In terms of biological role, photosystem II (PSII) is a light-driven water:plastoquinone oxidoreductase that uses light energy to abstract electrons from H(2)O, generating O(2) and a proton gradient subsequently used for ATP formation. It consists of a core antenna complex that captures photons, and an electron transfer chain that converts photonic excitation into a charge separation. The D1/D2 (PsbA/PsbD) reaction center heterodimer binds P680, the primary electron donor of PSII as well as several subsequent electron acceptors. D2 is needed for assembly of a stable PSII complex. In Oenothera argillicola (Appalachian evening primrose), this protein is Photosystem II D2 protein.